We begin with the raw amino-acid sequence, 594 residues long: NADH-ubiquinone oxidoreductase chain 5 (594 aa).

15 consecutive transmembrane segments (helical) span residues Met1–Met21, Ala43–Ile63, Ile87–Tyr107, Ile114–Ala134, Leu137–Trp157, Ala171–Ser191, Leu211–Leu233, Thr241–Ile261, Leu272–Ala292, Ile301–Asn320, Ala325–Ile347, Met366–Leu386, Leu409–Phe429, Leu457–Thr477, and Leu486–Leu506.

The protein belongs to the complex I subunit 5 family. In terms of assembly, core subunit of respiratory chain NADH dehydrogenase (Complex I) which is composed of 45 different subunits.

The protein resides in the mitochondrion inner membrane. It carries out the reaction a ubiquinone + NADH + 5 H(+)(in) = a ubiquinol + NAD(+) + 4 H(+)(out). Core subunit of the mitochondrial membrane respiratory chain NADH dehydrogenase (Complex I) which catalyzes electron transfer from NADH through the respiratory chain, using ubiquinone as an electron acceptor. Essential for the catalytic activity and assembly of complex I. The protein is NADH-ubiquinone oxidoreductase chain 5 (MT-ND5) of Hippopotamus amphibius (Hippopotamus).